The primary structure comprises 372 residues: Carbamoyl phosphate synthase small chain (372 aa).

Positions methionine 1 to proline 179 are CPSase. L-glutamine is bound by residues serine 45, glycine 231, and glycine 233. A Glutamine amidotransferase type-1 domain is found at aspartate 183–glutamine 369. Cysteine 258 (nucleophile) is an active-site residue. Leucine 259, glutamine 262, asparagine 300, glycine 302, and phenylalanine 303 together coordinate L-glutamine. Active-site residues include histidine 342 and glutamate 344.

This sequence belongs to the CarA family. As to quaternary structure, composed of two chains; the small (or glutamine) chain promotes the hydrolysis of glutamine to ammonia, which is used by the large (or ammonia) chain to synthesize carbamoyl phosphate. Tetramer of heterodimers (alpha,beta)4.

It carries out the reaction hydrogencarbonate + L-glutamine + 2 ATP + H2O = carbamoyl phosphate + L-glutamate + 2 ADP + phosphate + 2 H(+). The enzyme catalyses L-glutamine + H2O = L-glutamate + NH4(+). The protein operates within amino-acid biosynthesis; L-arginine biosynthesis; carbamoyl phosphate from bicarbonate: step 1/1. Its pathway is pyrimidine metabolism; UMP biosynthesis via de novo pathway; (S)-dihydroorotate from bicarbonate: step 1/3. Its function is as follows. Small subunit of the glutamine-dependent carbamoyl phosphate synthetase (CPSase). CPSase catalyzes the formation of carbamoyl phosphate from the ammonia moiety of glutamine, carbonate, and phosphate donated by ATP, constituting the first step of 2 biosynthetic pathways, one leading to arginine and/or urea and the other to pyrimidine nucleotides. The small subunit (glutamine amidotransferase) binds and cleaves glutamine to supply the large subunit with the substrate ammonia. This Akkermansia muciniphila (strain ATCC BAA-835 / DSM 22959 / JCM 33894 / BCRC 81048 / CCUG 64013 / CIP 107961 / Muc) protein is Carbamoyl phosphate synthase small chain.